Reading from the N-terminus, the 505-residue chain is MGEIKGYISQVIGPVVDIHFDYGTEETVTLPRIHDAMEISRPNGKILIVEVQQHIGENTVRTVAMDTTDGLRRGMEAVSYGMPITMPTGDQVKGRLMNVTGDPIDGMAQLTKDGALPIHREPPKFEDLTTTQEVLYTGIKVIDLLEPYAKGGKIGLFGGAGVGKTVLIMELINNIAKKNNGFSVFAGVGERTREGNDLLREMIQSGVIRYGEEFKKSMEAGNWDLSKIDYDELAKSQATLVFGQMNEPPGARSSVALSGLTIAESFRDKASEGERKDILFFIDNIFRFTQAGSEVSALLGRMPSAVGYQPTLATEMGAMQERITSTKKGSITSVQAVYVPADDLTDPAPATTFTHLDATTVLSRKITELGIYPAVDPLESTSRILDPLIVGKEHYDTAQRVKQILQRNKELQDIISILGMEELSDEDRLTVNRARRVQRFLSQPFSVAEQFTGVPGVMVSIEDTIRGFKMIMDGETDDIPEQAFLNVGTIEDVLEKAKQLKEQAN.

158-165 (GGAGVGKT) contributes to the ATP binding site.

The protein belongs to the ATPase alpha/beta chains family. In terms of assembly, F-type ATPases have 2 components, CF(1) - the catalytic core - and CF(0) - the membrane proton channel. CF(1) has five subunits: alpha(3), beta(3), gamma(1), delta(1), epsilon(1). CF(0) has three main subunits: a(1), b(2) and c(9-12). The alpha and beta chains form an alternating ring which encloses part of the gamma chain. CF(1) is attached to CF(0) by a central stalk formed by the gamma and epsilon chains, while a peripheral stalk is formed by the delta and b chains.

It is found in the cell inner membrane. It carries out the reaction ATP + H2O + 4 H(+)(in) = ADP + phosphate + 5 H(+)(out). Its function is as follows. Produces ATP from ADP in the presence of a proton gradient across the membrane. The catalytic sites are hosted primarily by the beta subunits. The protein is ATP synthase subunit beta of Parabacteroides distasonis (strain ATCC 8503 / DSM 20701 / CIP 104284 / JCM 5825 / NCTC 11152).